A 160-amino-acid chain; its full sequence is Large ribosomal subunit protein eL21 (160 aa).

This sequence belongs to the eukaryotic ribosomal protein eL21 family. Component of the large ribosomal subunit. Mature ribosomes consist of a small (40S) and a large (60S) subunit. The 40S subunit contains about 32 different proteins and 1 molecule of RNA (18S). The 60S subunit contains 45 different proteins and 3 molecules of RNA (25S, 5.8S and 5S).

The protein localises to the cytoplasm. Component of the ribosome, a large ribonucleoprotein complex responsible for the synthesis of proteins in the cell. The small ribosomal subunit (SSU) binds messenger RNAs (mRNAs) and translates the encoded message by selecting cognate aminoacyl-transfer RNA (tRNA) molecules. The large subunit (LSU) contains the ribosomal catalytic site termed the peptidyl transferase center (PTC), which catalyzes the formation of peptide bonds, thereby polymerizing the amino acids delivered by tRNAs into a polypeptide chain. The nascent polypeptides leave the ribosome through a tunnel in the LSU and interact with protein factors that function in enzymatic processing, targeting, and the membrane insertion of nascent chains at the exit of the ribosomal tunnel. This is Large ribosomal subunit protein eL21 from Candida albicans (strain SC5314 / ATCC MYA-2876) (Yeast).